Consider the following 86-residue polypeptide: Large ribosomal subunit protein uL30m (86 aa).

Positions 67–86 are disordered; it reads QQRELRKSNPGFIVEKRTID.

The protein belongs to the universal ribosomal protein uL30 family. Component of the mitochondrial large ribosomal subunit (mt-LSU). Mature yeast 74S mitochondrial ribosomes consist of a small (37S) and a large (54S) subunit. The 37S small subunit contains a 15S ribosomal RNA (15S mt-rRNA) and 34 different proteins. The 54S large subunit contains a 21S rRNA (21S mt-rRNA) and 46 different proteins.

It is found in the mitochondrion. Its function is as follows. Component of the mitochondrial ribosome (mitoribosome), a dedicated translation machinery responsible for the synthesis of mitochondrial genome-encoded proteins, including at least some of the essential transmembrane subunits of the mitochondrial respiratory chain. The mitoribosomes are attached to the mitochondrial inner membrane and translation products are cotranslationally integrated into the membrane. In Saccharomyces cerevisiae (strain ATCC 204508 / S288c) (Baker's yeast), this protein is Large ribosomal subunit protein uL30m (MRPL33).